The primary structure comprises 607 residues: Granule-bound starch synthase 1, chloroplastic/amyloplastic (607 aa).

Residues 1-77 constitute a chloroplast transit peptide; it reads MASITASHHF…RPGCSATIVC (77 aa). An ADP-alpha-D-glucose-binding site is contributed by K95. A disordered region spans residues 585–607; it reads SGSEPGVEGEEIAPLAKENVATP.

This sequence belongs to the glycosyltransferase 1 family. Bacterial/plant glycogen synthase subfamily.

It localises to the plastid. The protein localises to the chloroplast. Its subcellular location is the amyloplast. It catalyses the reaction an NDP-alpha-D-glucose + [(1-&gt;4)-alpha-D-glucosyl](n) = [(1-&gt;4)-alpha-D-glucosyl](n+1) + a ribonucleoside 5'-diphosphate + H(+). The protein operates within glycan biosynthesis; starch biosynthesis. The sequence is that of Granule-bound starch synthase 1, chloroplastic/amyloplastic (WAXY) from Solanum tuberosum (Potato).